The primary structure comprises 203 residues: LexA repressor (203 aa).

The H-T-H motif DNA-binding region spans 32 to 52; that stretch reads RAEICTAFGFRSPNAAETHLR. Residues S121 and K158 each act as for autocatalytic cleavage activity in the active site.

Belongs to the peptidase S24 family. As to quaternary structure, homodimer.

It catalyses the reaction Hydrolysis of Ala-|-Gly bond in repressor LexA.. In terms of biological role, represses a number of genes involved in the response to DNA damage (SOS response), including recA and lexA. In the presence of single-stranded DNA, RecA interacts with LexA causing an autocatalytic cleavage which disrupts the DNA-binding part of LexA, leading to derepression of the SOS regulon and eventually DNA repair. In Aromatoleum aromaticum (strain DSM 19018 / LMG 30748 / EbN1) (Azoarcus sp. (strain EbN1)), this protein is LexA repressor.